The following is a 732-amino-acid chain: Elongation factor 2 (732 aa).

Residues 19-228 (ELIRNIGIVA…TKITFKDIVE (210 aa)) form the tr-type G domain. GTP contacts are provided by residues 28 to 35 (AHIDHGKT), 94 to 98 (DTPGH), and 148 to 151 (NKID). His-598 is subject to Diphthamide.

Belongs to the TRAFAC class translation factor GTPase superfamily. Classic translation factor GTPase family. EF-G/EF-2 subfamily.

The protein localises to the cytoplasm. Catalyzes the GTP-dependent ribosomal translocation step during translation elongation. During this step, the ribosome changes from the pre-translocational (PRE) to the post-translocational (POST) state as the newly formed A-site-bound peptidyl-tRNA and P-site-bound deacylated tRNA move to the P and E sites, respectively. Catalyzes the coordinated movement of the two tRNA molecules, the mRNA and conformational changes in the ribosome. The polypeptide is Elongation factor 2 (fusA) (Thermoplasma acidophilum (strain ATCC 25905 / DSM 1728 / JCM 9062 / NBRC 15155 / AMRC-C165)).